A 1305-amino-acid chain; its full sequence is RNA-directed RNA polymerase (1305 aa).

The 252-residue stretch at 563-814 (IIVGDLEATG…KTLIAPFSVE (252 aa)) folds into the RdRp catalytic domain.

It belongs to the reoviridae RNA-directed RNA polymerase family.

It carries out the reaction RNA(n) + a ribonucleoside 5'-triphosphate = RNA(n+1) + diphosphate. This chain is RNA-directed RNA polymerase (Segment-1), found in African horse sickness virus (AHSV).